The sequence spans 481 residues: Glycosyl hydrolase family 109 protein 1 (481 aa).

Residues M1–A29 constitute a signal peptide (tat-type signal). NAD(+) contacts are provided by residues E84–R85, D106, W155–H158, E175–V176, and N204. Substrate is bound by residues Y233, R252, Y264–H267, and Y347. Y264 provides a ligand contact to NAD(+).

The protein belongs to the Gfo/Idh/MocA family. Glycosyl hydrolase 109 subfamily. It depends on NAD(+) as a cofactor. Post-translationally, predicted to be exported by the Tat system. The position of the signal peptide cleavage has not been experimentally proven.

Its function is as follows. Glycosidase. The polypeptide is Glycosyl hydrolase family 109 protein 1 (Akkermansia muciniphila (strain ATCC BAA-835 / DSM 22959 / JCM 33894 / BCRC 81048 / CCUG 64013 / CIP 107961 / Muc)).